Reading from the N-terminus, the 184-residue chain is Ribosome maturation factor RimM (184 aa).

Residues 93-165 (DEGWYEHELV…YILITPPSGL (73 aa)) form the PRC barrel domain.

The protein belongs to the RimM family. In terms of assembly, binds ribosomal protein uS19.

It localises to the cytoplasm. Its function is as follows. An accessory protein needed during the final step in the assembly of 30S ribosomal subunit, possibly for assembly of the head region. Essential for efficient processing of 16S rRNA. May be needed both before and after RbfA during the maturation of 16S rRNA. It has affinity for free ribosomal 30S subunits but not for 70S ribosomes. In Paenarthrobacter aurescens (strain TC1), this protein is Ribosome maturation factor RimM.